The primary structure comprises 140 residues: Nucleoside diphosphate kinase (140 aa).

Positions 9, 57, 85, 91, 102, and 112 each coordinate ATP. H115 acts as the Pros-phosphohistidine intermediate in catalysis.

This sequence belongs to the NDK family. As to quaternary structure, homotetramer. Requires Mg(2+) as cofactor.

The protein resides in the cytoplasm. It catalyses the reaction a 2'-deoxyribonucleoside 5'-diphosphate + ATP = a 2'-deoxyribonucleoside 5'-triphosphate + ADP. The enzyme catalyses a ribonucleoside 5'-diphosphate + ATP = a ribonucleoside 5'-triphosphate + ADP. Its function is as follows. Major role in the synthesis of nucleoside triphosphates other than ATP. The ATP gamma phosphate is transferred to the NDP beta phosphate via a ping-pong mechanism, using a phosphorylated active-site intermediate. The protein is Nucleoside diphosphate kinase of Chlorobaculum tepidum (strain ATCC 49652 / DSM 12025 / NBRC 103806 / TLS) (Chlorobium tepidum).